The primary structure comprises 517 residues: Ribonuclease Y (517 aa).

A helical transmembrane segment spans residues 4 to 24 (LIYIVILFVGIAAGAFFGISV). The KH domain occupies 207–267 (TISTVALPND…LRREVARRTI (61 aa)). In terms of domain architecture, HD spans 333 to 426 (VLAHSVEVAQ…VAAADAISAA (94 aa)).

It belongs to the RNase Y family.

The protein resides in the cell membrane. Endoribonuclease that initiates mRNA decay. The protein is Ribonuclease Y of Fervidobacterium nodosum (strain ATCC 35602 / DSM 5306 / Rt17-B1).